The sequence spans 264 residues: Sulfur carrier protein FdhD (264 aa).

Cys-107 acts as the Cysteine persulfide intermediate in catalysis.

Belongs to the FdhD family.

The protein localises to the cytoplasm. In terms of biological role, required for formate dehydrogenase (FDH) activity. Acts as a sulfur carrier protein that transfers sulfur from IscS to the molybdenum cofactor prior to its insertion into FDH. In Staphylococcus haemolyticus (strain JCSC1435), this protein is Sulfur carrier protein FdhD.